We begin with the raw amino-acid sequence, 509 residues long: Scavenger receptor class B member 1 (509 aa).

Residues 1–11 (MGGSSRARWVA) are Cytoplasmic-facing. A helical transmembrane segment spans residues 12-32 (LGLGALGLLFAALGVVMILMV). Residues 33 to 440 (PSLIKQQVLK…YTQLVLMPQV (408 aa)) lie on the Extracellular side of the membrane. Residues Asn102, Asn108, Asn116, Asn173, Asn212, Asn227, Asn255, Asn288, Asn310, Asn330, and Asn383 are each glycosylated (N-linked (GlcNAc...) asparagine). The cysteines at positions 251 and 384 are disulfide-linked. A helical membrane pass occupies residues 441–461 (LHYAQYVLLGLGGLLLLVPII). A lipid anchor (S-palmitoyl cysteine) is attached at Cys462. The Cytoplasmic segment spans residues 462–509 (CQLRSQEKCFLFWSGSKKGSQDKEAIQAYSESLMSPAAKGTVLQEAKL).

This sequence belongs to the CD36 family. The C-terminal region binds to PDZK1. In terms of processing, N-glycosylated. Post-translationally, the six cysteines of the extracellular domain are all involved in intramolecular disulfide bonds. Expressed primarily in liver, ovary and adrenal gland, and, at lower levels in other non-placental steroidogenic tissues, including adipose tissue, mammary gland and testis (at protein level). Isoform 2 is expressed at lower levels than isoform 1 in liver, testis and adrenal gland. At the mRNA, but not at the protein level, isoform 2 is the predominant isoform in testis (80%).

The protein resides in the cell membrane. Its subcellular location is the membrane. It localises to the caveola. In terms of biological role, receptor for different ligands such as phospholipids, cholesterol ester, lipoproteins, phosphatidylserine and apoptotic cells. Both isoform 1 and isoform 2 act as receptors for HDL, mediating selective uptake of cholesteryl ether and HDL-dependent cholesterol efflux. Also facilitates the flux of free and esterified cholesterol between the cell surface and apoB-containing lipoproteins and modified lipoproteins, although less efficiently than HDL. May be involved in the phagocytosis of apoptotic cells, via its phosphatidylserine binding activity. The polypeptide is Scavenger receptor class B member 1 (Scarb1) (Mus musculus (Mouse)).